A 74-amino-acid polypeptide reads, in one-letter code: Translational regulator CsrA (74 aa).

This sequence belongs to the CsrA/RsmA family. In terms of assembly, homodimer; the beta-strands of each monomer intercalate to form a hydrophobic core, while the alpha-helices form wings that extend away from the core.

Its subcellular location is the cytoplasm. Its function is as follows. A translational regulator that binds mRNA to regulate translation initiation and/or mRNA stability. Usually binds in the 5'-UTR at or near the Shine-Dalgarno sequence preventing ribosome-binding, thus repressing translation. Its main target seems to be the major flagellin gene, while its function is anatagonized by FliW. The chain is Translational regulator CsrA from Bacillus velezensis (strain DSM 23117 / BGSC 10A6 / LMG 26770 / FZB42) (Bacillus amyloliquefaciens subsp. plantarum).